Here is a 757-residue protein sequence, read N- to C-terminus: Protein aardvark (757 aa).

Disordered regions lie at residues 39-63 (SSINNNINNNNNNNNNNNSNNDSNN), 122-166 (LEEN…SSIL), and 256-285 (SSNGSTNNHNNNNNNNHHHHSNNGNLIESS). Residues 121–205 (ILEENNNNNN…FNQFNFLEGI (85 aa)) adopt a coiled-coil conformation. Low complexity-rich tracts occupy residues 125–164 (NNNNNNNNNNNNNNNNNNNNNNNNNNNNNNNNNSSSSSSS) and 256–270 (SSNGSTNNHNNNNNN). In terms of domain architecture, F-box spans 310–356 (QFDIFLIPTEMLVHLLSFLSANDLWRISLTCKRIWYIVDVFKFWELL). 6 ARM repeats span residues 454–498 (GGIS…SNDN), 506–548 (GGIQ…VAIE), 549–591 (GGIQ…SAKE), 592–634 (GGIG…ISRQ), 635–678 (NGIQ…IARE), and 679–723 (GGIN…RSGG).

The protein belongs to the beta-catenin family.

The protein localises to the cytoplasm. It is found in the cell junction. Its function is as follows. Required to regulate pattern formation during multi-cellular stages of development and for the formation of adherens junctions. Plays a structural role during the regulation of stalk formation. Involved in cell signaling. Required for spore-cell differentiation. Overexpression increases number and size of cell junctions and reduces spore-cell formation. This is Protein aardvark (aarA) from Dictyostelium discoideum (Social amoeba).